The following is a 479-amino-acid chain: Membrane-bound lytic murein transglycosylase F (479 aa).

Positions Met-1–Ala-18 are cleaved as a signal peptide. The tract at residues Ile-19 to Leu-266 is non-LT domain. Positions Asn-267–Arg-479 are LT domain. Glu-311 is a catalytic residue.

It in the N-terminal section; belongs to the bacterial solute-binding protein 3 family. In the C-terminal section; belongs to the transglycosylase Slt family.

Its subcellular location is the cell outer membrane. The enzyme catalyses Exolytic cleavage of the (1-&gt;4)-beta-glycosidic linkage between N-acetylmuramic acid (MurNAc) and N-acetylglucosamine (GlcNAc) residues in peptidoglycan, from either the reducing or the non-reducing ends of the peptidoglycan chains, with concomitant formation of a 1,6-anhydrobond in the MurNAc residue.. In terms of biological role, murein-degrading enzyme that degrades murein glycan strands and insoluble, high-molecular weight murein sacculi, with the concomitant formation of a 1,6-anhydromuramoyl product. Lytic transglycosylases (LTs) play an integral role in the metabolism of the peptidoglycan (PG) sacculus. Their lytic action creates space within the PG sacculus to allow for its expansion as well as for the insertion of various structures such as secretion systems and flagella. The polypeptide is Membrane-bound lytic murein transglycosylase F (Histophilus somni (strain 2336) (Haemophilus somnus)).